The following is a 62-amino-acid chain: Large ribosomal subunit protein bL33 (62 aa).

This sequence belongs to the bacterial ribosomal protein bL33 family.

This chain is Large ribosomal subunit protein bL33, found in Acaryochloris marina (strain MBIC 11017).